A 235-amino-acid chain; its full sequence is Large ribosomal subunit protein uL1 (235 aa).

It belongs to the universal ribosomal protein uL1 family. In terms of assembly, part of the 50S ribosomal subunit.

Binds directly to 23S rRNA. The L1 stalk is quite mobile in the ribosome, and is involved in E site tRNA release. Its function is as follows. Protein L1 is also a translational repressor protein, it controls the translation of the L11 operon by binding to its mRNA. The protein is Large ribosomal subunit protein uL1 of Nitratidesulfovibrio vulgaris (strain ATCC 29579 / DSM 644 / CCUG 34227 / NCIMB 8303 / VKM B-1760 / Hildenborough) (Desulfovibrio vulgaris).